Reading from the N-terminus, the 538-residue chain is Beta-1,4-mannosyl-glycoprotein 4-beta-N-acetylglucosaminyltransferase (538 aa).

Residues 1–7 (MKMRRYK) lie on the Cytoplasmic side of the membrane. A helical; Signal-anchor for type II membrane protein transmembrane segment spans residues 8–23 (LFLMFCMAGLCLISFL). Residues 24-538 (HFFKTLSYVT…VRGKLDTTEG (515 aa)) lie on the Lumenal side of the membrane. The tract at residues 121-151 (GTRMLEKPSPGRTEEKTKVAEGSSVRGPARR) is disordered. Residues asparagine 245, asparagine 263, and asparagine 401 are each glycosylated (N-linked (GlcNAc...) asparagine). Positions 509 to 538 (PKSTVEGGRRNQGSDGRSSAVRGKLDTTEG) are disordered.

It belongs to the glycosyltransferase 17 family. As to quaternary structure, interacts with MGAT4D.

It is found in the golgi apparatus membrane. It carries out the reaction N(4)-{beta-D-GlcNAc-(1-&gt;2)-alpha-D-Man-(1-&gt;3)-[beta-D-GlcNAc-(1-&gt;2)-alpha-D-Man-(1-&gt;6)]-beta-D-Man-(1-&gt;4)-beta-D-GlcNAc-(1-&gt;4)-beta-D-GlcNAc}-L-asparaginyl-[protein] + UDP-N-acetyl-alpha-D-glucosamine = N(4)-{beta-D-GlcNAc-(1-&gt;2)-alpha-D-Man-(1-&gt;3)-[beta-D-GlcNAc-(1-&gt;4)]-[beta-D-GlcNAc-(1-&gt;2)-alpha-D-Man-(1-&gt;6)]-beta-D-Man-(1-&gt;4)-beta-D-GlcNAc-(1-&gt;4)-beta-D-GlcNAc}-L-asparaginyl-[protein] + UDP + H(+). It participates in protein modification; protein glycosylation. It is involved in the regulation of the biosynthesis and biological function of glycoprotein oligosaccharides. Catalyzes the addition of N-acetylglucosamine in beta 1-4 linkage to the beta-linked mannose of the trimannosyl core of N-linked sugar chains, called bisecting N-acetylglucosamine (GlcNAc). It is one of the most important enzymes involved in the regulation of the biosynthesis of glycoprotein oligosaccharides. The addition of this bisecting GlcNAc residue alters not only the composition, but also the conformation of the N-glycan. The introduction of the bisecting GlcNAc residue results in the suppression of further processing and elongation of N-glycans, precluding the formation of beta-1,6 GlcNAc branching, catalyzed by MGAT5 since it is unable to use the bisected oligosaccharide as a substrate. Addition of bisecting N-acetylglucosamine to CDH1/E-cadherin modulates CDH1 cell membrane location. Inhibits NeuAc-alpha-2,3-Gal-beta-1,4-GlcNAc- formation which modulates sialylation levels and plays a role in cell migration regulation. In brain, addition of bisecting N-acetylglucosamine to BACE1 blocks its lysosomal targeting in response to oxidative stress and further degradation which increases its location to early endosome and the APP cleavage. The protein is Beta-1,4-mannosyl-glycoprotein 4-beta-N-acetylglucosaminyltransferase (Mgat3) of Rattus norvegicus (Rat).